A 163-amino-acid chain; its full sequence is Nucleotide-binding protein HSM_1099 (163 aa).

Belongs to the YajQ family.

Functionally, nucleotide-binding protein. The polypeptide is Nucleotide-binding protein HSM_1099 (Histophilus somni (strain 2336) (Haemophilus somnus)).